The primary structure comprises 176 residues: Probable superoxide oxidase CybB (176 aa).

The next 4 membrane-spanning stretches (helical) occupy residues 7-27 (CLQI…WSSI), 44-64 (IHFS…LIQL), 85-105 (VGHW…IAIL), and 137-157 (HLLL…AALL). Residues His13 and His45 each coordinate heme b. His137 and His151 together coordinate heme b.

The protein belongs to the cytochrome b561 family. It depends on heme b as a cofactor.

It is found in the cell inner membrane. It catalyses the reaction a ubiquinol + 2 O2 = 2 superoxide + a ubiquinone + 2 H(+). In terms of biological role, B-type di-heme cytochrome. Catalyzes the oxidation of superoxide to molecular oxygen and transfers the extracted electrons to ubiquinone through the two hemes. The chain is Probable superoxide oxidase CybB (cybB) from Yersinia pestis.